The chain runs to 406 residues: Leu/Ile/Val-binding protein homolog 5 (406 aa).

Positions 1–29 are cleaved as a signal peptide; sequence MIGTRLPAWTRVLACGVAGLSLMTISAKA.

The protein belongs to the leucine-binding protein family.

Functionally, component of an amino-acid transport system. In Brucella suis biovar 1 (strain 1330), this protein is Leu/Ile/Val-binding protein homolog 5.